The primary structure comprises 427 residues: Ectonucleoside triphosphate diphosphohydrolase 5 (427 aa).

The signal sequence occupies residues 1-24 (MATSWGAVFMLIIACVGSTVFYRE). Glutamate 171 (proton acceptor) is an active-site residue. Residue asparagine 231 is glycosylated (N-linked (GlcNAc...) asparagine). 2 disulfides stabilise this stretch: cysteine 271/cysteine 302 and cysteine 362/cysteine 376.

Belongs to the GDA1/CD39 NTPase family. Monomer; active form. Homodimer; disulfide-linked. Homodimers are enzymatically inactive. It depends on Ca(2+) as a cofactor. Requires Mg(2+) as cofactor. N-glycosylated; high-mannose type. Ubiquitous.

Its subcellular location is the endoplasmic reticulum. It is found in the secreted. The enzyme catalyses a ribonucleoside 5'-diphosphate + H2O = a ribonucleoside 5'-phosphate + phosphate + H(+). It catalyses the reaction GDP + H2O = GMP + phosphate + H(+). It carries out the reaction UDP + H2O = UMP + phosphate + H(+). The catalysed reaction is IDP + H2O = IMP + phosphate + H(+). The enzyme catalyses CDP + H2O = CMP + phosphate + H(+). It catalyses the reaction ADP + H2O = AMP + phosphate + H(+). It participates in protein modification; protein glycosylation. Hydrolyzes nucleoside diphosphates with a preference for GDP, IDP and UDP compared to ADP and CDP. In the lumen of the endoplasmic reticulum, hydrolyzes UDP that acts as an end-product feedback inhibitor of the UDP-Glc:glycoprotein glucosyltransferases. UMP can be transported back by an UDP-sugar antiporter to the cytosol where it is consumed to regenerate UDP-glucose. Therefore, it positively regulates protein reglucosylation by clearing UDP from the ER lumen and by promoting the regeneration of UDP-glucose. Protein reglucosylation is essential to proper glycoprotein folding and quality control in the ER. This chain is Ectonucleoside triphosphate diphosphohydrolase 5 (Entpd5), found in Mus musculus (Mouse).